A 415-amino-acid polypeptide reads, in one-letter code: Histidine--tRNA ligase (415 aa).

The protein belongs to the class-II aminoacyl-tRNA synthetase family. In terms of assembly, homodimer.

It localises to the cytoplasm. It carries out the reaction tRNA(His) + L-histidine + ATP = L-histidyl-tRNA(His) + AMP + diphosphate + H(+). The sequence is that of Histidine--tRNA ligase from Idiomarina loihiensis (strain ATCC BAA-735 / DSM 15497 / L2-TR).